The primary structure comprises 651 residues: Epithelial sodium channel subunit beta (651 aa).

Topologically, residues 1-50 are cytoplasmic; sequence MFLKRWFIRALHRLQKGPGYGYSELFVWYCNNTNTHGPKRLIIEGPKKKT. The helical transmembrane segment at 51 to 71 threads the bilayer; sequence LWSLFTVTFACLVFWQWGLLI. Residues 72–541 lie on the Extracellular side of the membrane; it reads QTYLSWGVSV…GGQFGFWMGG (470 aa). 8 disulfides stabilise this stretch: C98–C281, C205–C212, C258–C265, C370–C457, C395–C453, C399–C449, C408–C435, and C410–C424. Residues 542–562 form a helical membrane-spanning segment; it reads SVLCIIEFGEVFIDCIWIAVI. The Cytoplasmic segment spans residues 563 to 651; sequence RFVKWYKNRK…TEHHSDSEDL (89 aa). The tract at residues 612–651 is disordered; it reads QPPDLYLPTTLEIPGTPPPKYDSLRVHPIDTEHHSDSEDL. Residues 633–651 show a composition bias toward basic and acidic residues; that stretch reads DSLRVHPIDTEHHSDSEDL.

It belongs to the amiloride-sensitive sodium channel (TC 1.A.6) family. SCNN1B subfamily. Component of the heterotrimeric epithelial sodium channel (ENaC) composed of an alpha/SCNN1A, a beta/SCNN1B and a gamma/SCNN1G subunit. In terms of tissue distribution, strongly expressed in gill, kidney and rectum and more weakly in brain, eye, liver and muscle.

The protein localises to the apical cell membrane. It localises to the cytoplasmic vesicle membrane. It catalyses the reaction Na(+)(in) = Na(+)(out). With respect to regulation, originally identified and characterized by its inhibition by the diuretic drug amiloride. Its function is as follows. This is one of the three pore-forming subunits of the heterotrimeric epithelial sodium channel (ENaC), a critical regulator of sodium balance and fluid homeostasis. ENaC operates in epithelial tissues, where it mediates the electrodiffusion of sodium ions from extracellular fluid through the apical membrane of cells, with water following osmotically. The polypeptide is Epithelial sodium channel subunit beta (Neoceratodus forsteri (Australian lungfish)).